Reading from the N-terminus, the 449-residue chain is Signal recognition particle protein (449 aa).

Residues 109–116 (GLQGSGKT), 191–195 (DTAGR), and 249–252 (SRID) each bind GTP.

The protein belongs to the GTP-binding SRP family. SRP54 subfamily. In terms of assembly, part of the signal recognition particle protein translocation system, which is composed of SRP and FtsY. SRP is a ribonucleoprotein composed of Ffh and a 4.5S RNA molecule.

The protein localises to the cytoplasm. The catalysed reaction is GTP + H2O = GDP + phosphate + H(+). Its function is as follows. Involved in targeting and insertion of nascent membrane proteins into the cytoplasmic membrane. Binds to the hydrophobic signal sequence of the ribosome-nascent chain (RNC) as it emerges from the ribosomes. The SRP-RNC complex is then targeted to the cytoplasmic membrane where it interacts with the SRP receptor FtsY. Interaction with FtsY leads to the transfer of the RNC complex to the Sec translocase for insertion into the membrane, the hydrolysis of GTP by both Ffh and FtsY, and the dissociation of the SRP-FtsY complex into the individual components. The polypeptide is Signal recognition particle protein (Rickettsia conorii (strain ATCC VR-613 / Malish 7)).